The sequence spans 397 residues: Keratinocyte differentiation factor 1 (397 aa).

A compositionally biased stretch (pro residues) spans 1–16; the sequence is MPRPGQPRPSSGPPRL. Disordered regions lie at residues 1–67, 130–158, and 192–214; these read MPRP…SAEP, EHNGVPPSPDRAPPSRRDGQRLKTSMGSS, and LAEPPPTRHSLPSTFTNSPRGSE. Residues 44-55 are compositionally biased toward basic and acidic residues; the sequence is RPDPKDPGHHGP. A compositionally biased stretch (polar residues) spans 201–211; the sequence is SLPSTFTNSPR. Position 218 is a phosphoserine (S218). 2 disordered regions span residues 304-339 and 361-392; these read ISTRKSRSRPQTSEGRSARSTAPAAAPDSGHETMLG and ARKLRPYGAPGYPASQDSSFQGTDTDSSGAPL. Over residues 321–330 the composition is skewed to low complexity; that stretch reads ARSTAPAAAP. Over residues 375–388 the composition is skewed to polar residues; that stretch reads SQDSSFQGTDTDSS.

Its subcellular location is the cytoplasm. It is found in the cell junction. In terms of biological role, plays a role in the regulation of the epidermis formation during early development. Required both as an inhibitor of basal cell proliferation and a promoter of differentiation of basal progenitor cell progeny. This is Keratinocyte differentiation factor 1 (Kdf1) from Mus musculus (Mouse).